A 518-amino-acid chain; its full sequence is Retinal dehydrogenase 2 (518 aa).

Y168 bears the Phosphotyrosine mark. NAD(+) contacts are provided by residues 184–186 (IPW), 210–213 (KPAE), and 264–266 (STE). E286 acts as the Proton acceptor in catalysis. The active-site Nucleophile is C320. S351 carries the post-translational modification Phosphoserine. Residues 366-370 (KQYNK) and E417 contribute to the NAD(+) site.

It belongs to the aldehyde dehydrogenase family. As to quaternary structure, homotetramer.

Its subcellular location is the cytoplasm. It carries out the reaction retinal + NAD(+) + H2O = retinoate + NADH + 2 H(+). The enzyme catalyses all-trans-retinal + NAD(+) + H2O = all-trans-retinoate + NADH + 2 H(+). It catalyses the reaction all-trans-13,14-dihydroretinal + NAD(+) + H2O = all-trans-13,14-dihydroretinoate + NADH + 2 H(+). It participates in cofactor metabolism; retinol metabolism. In terms of biological role, catalyzes the NAD-dependent oxidation of aldehyde substrates, such as all-trans-retinal and all-trans-13,14-dihydroretinal, to their corresponding carboxylic acids, all-trans-retinoate and all-trans-13,14-dihydroretinoate, respectively. Retinoate signaling is critical for the transcriptional control of many genes, for instance it is crucial for initiation of meiosis in both male and female. Recognizes retinal as substrate, both in its free form and when bound to cellular retinol-binding protein. Lacks activity with benzaldehyde, acetaldehyde and octanal. Displays complete lack of activity with citral. In Mus musculus (Mouse), this protein is Retinal dehydrogenase 2 (Aldh1a2).